A 215-amino-acid polypeptide reads, in one-letter code: Cytidylate kinase (215 aa).

Residue 10–18 participates in ATP binding; it reads GPAAAGKST.

This sequence belongs to the cytidylate kinase family. Type 1 subfamily.

The protein localises to the cytoplasm. The catalysed reaction is CMP + ATP = CDP + ADP. It catalyses the reaction dCMP + ATP = dCDP + ADP. The polypeptide is Cytidylate kinase (Staphylococcus epidermidis (strain ATCC 35984 / DSM 28319 / BCRC 17069 / CCUG 31568 / BM 3577 / RP62A)).